A 267-amino-acid polypeptide reads, in one-letter code: Luciferase (267 aa).

The N-linked (GlcNAc...) asparagine glycan is linked to Asn-4. Residues 17–39 traverse the membrane as a helical segment; the sequence is LSSRSIAITCGVVLASAIAFPII.

The protein belongs to the fungal luciferase family.

Its subcellular location is the membrane. The catalysed reaction is 3-hydroxyhispidin + O2 = (E)-caffeoylpyruvate + hnu + CO2. The enzyme catalyses 3-hydroxyhispidin + O2 = 4-[(E)-2-(3,4-dihydroxyphenyl)ethenyl]-1,7-dihydroxy-2,3,5-trioxabicyclo[2.2.2]oct-7-en-6-one. Functionally, luciferase; part of the gene cluster that mediates the fungal bioluminescence cycle. Uses the fungal luciferin 3-hydroxyhispidin as a substrate to produce an endoperoxide as a high-energy intermediate with decomposition that yields oxyluciferin (also known as caffeoylpyruvate) and light emission. The fungal bioluminescence cycle begins with the hispidin synthetase that catalyzes the formation of hispidin which is further hydroxylated by the hispidin-3-hydroxylase, yielding the fungal luciferin 3-hydroxyhispidin. The luciferase then produces an endoperoxide as a high-energy intermediate with decomposition that yields oxyluciferin and light emission. Oxyluciferin can be recycled to caffeic acid by caffeoylpyruvate hydrolase. The protein is Luciferase of Neonothopanus nambi (Agaricus nambi).